Reading from the N-terminus, the 1162-residue chain is Leptin receptor (1162 aa).

Positions 1 to 21 (MMCQKFYVVLLHWEFLYVIAA) are cleaved as a signal peptide. At 22 to 839 (LNLAYPISPW…AIDKQQNDAG (818 aa)) the chain is on the extracellular side. 5 disulfide bridges follow: cysteine 37-cysteine 90, cysteine 89-cysteine 99, cysteine 131-cysteine 142, cysteine 186-cysteine 195, and cysteine 188-cysteine 193. Asparagine 41, asparagine 56, asparagine 73, and asparagine 98 each carry an N-linked (GlcNAc...) asparagine glycan. The N-linked (GlcNAc...) asparagine glycan is linked to asparagine 187. The Fibronectin type-III 1 domain occupies 238-331 (PPLGLHMEVT…SPQVFTTQDV (94 aa)). N-linked (GlcNAc...) asparagine glycans are attached at residues asparagine 275 and asparagine 345. The region spanning 329–427 (QDVVYFPPKI…HRYAELYVID (99 aa)) is the Ig-like domain. Cystine bridges form between cysteine 350/cysteine 410 and cysteine 411/cysteine 416. An N-linked (GlcNAc...) asparagine glycan is attached at asparagine 431. 3 disulfides stabilise this stretch: cysteine 434/cysteine 445, cysteine 471/cysteine 526, and cysteine 486/cysteine 496. The interval 465–482 (HRRSLYCPDSPSIHPTSE) is leptin-binding. N-linked (GlcNAc...) asparagine glycans are attached at residues asparagine 514, asparagine 622, asparagine 657, asparagine 668, asparagine 686, asparagine 695, asparagine 698, and asparagine 726. Fibronectin type-III domains are found at residues 537 to 632 (PPSN…TLVM), 637 to 729 (PMRG…NLTF), and 738 to 832 (AVES…DAID). The WSXWS motif motif lies at 620 to 624 (WSNWS). Residues 840-860 (LYVIVPIIISSCVLLLGTLLI) form a helical membrane-spanning segment. The Cytoplasmic segment spans residues 861-1162 (SHQRMKKLFW…MENKMCDLTV (302 aa)). Residues 869–877 (FWDDVPNPK) carry the Box 1 motif motif. Serine 880 carries the phosphoserine modification. Residues 891-896 (ETFEHL) form a required for JAK2 activation region. Residues 896–904 (LFTKHAESV) are required for STAT3 phosphorylation. Position 985 is a phosphotyrosine; by JAK2 (tyrosine 985). A Phosphotyrosine modification is found at tyrosine 1077. Tyrosine 1138 bears the Phosphotyrosine; by JAK2 mark.

It belongs to the type I cytokine receptor family. Type 2 subfamily. Present as a mixture of monomers and dimers. The phosphorylated receptor binds a number of SH2 domain-containing proteins such as JAK2, STAT3, PTPN11, and SOCS3. Interaction with SOCS3 inhibits JAK/STAT signaling and MAPK cascade. Post-translationally, on ligand binding, phosphorylated on two conserved C-terminal tyrosine residues (isoform B only) by JAK2. Tyr-985 is required for complete binding and activation of PTPN11, ERK/FOS activation,for interaction with SOCS3 and SOCS3 mediated inhibition of leptin signaling. Phosphorylation on Tyr-1138 is required for STAT3 binding/activation. Phosphorylation of Tyr-1077 has a more accessory role. As to expression, isoform A: highest level of expression in lung and kidney, also present in heart, brain, spleen, liver, muscle, choroid plexus and hypothalamus. Isoform B: highest levels of expression in hypothalamus and lower levels in brain, testes and adipose tissue. Expressed by neurons of the parabrachial nucleus. Expressed by peripheral blood mononuclear cells and CD4(+) T-cells. Isoform E: expressed in adipose tissue, liver, hypothalamus, cerebral microvessels, heart, and testes.

The protein resides in the cell membrane. Its subcellular location is the basolateral cell membrane. It localises to the secreted. Its function is as follows. Receptor for hormone LEP/leptin. On ligand binding, mediates LEP central and peripheral effects through the activation of different signaling pathways such as JAK2/STAT3 and MAPK cascade/FOS. In the hypothalamus, LEP acts as an appetite-regulating factor that induces a decrease in food intake and an increase in energy consumption by inducing anorexinogenic factors and suppressing orexigenic neuropeptides, also regulates bone mass and secretion of hypothalamo-pituitary-adrenal hormones. In the periphery, increases basal metabolism, influences reproductive function, regulates pancreatic beta-cell function and insulin secretion, is pro-angiogenic and affects innate and adaptive immunity. Control of energy homeostasis and melanocortin production (stimulation of POMC and full repression of AgRP transcription) is mediated by STAT3 signaling, whereas distinct signals regulate NPY and the control of fertility, growth and glucose homeostasis. Involved in the regulation of counter-regulatory response to hypoglycemia by inhibiting neurons of the parabrachial nucleus. Has a specific effect on T lymphocyte responses, differentially regulating the proliferation of naive and memory T-cells. Leptin increases Th1 and suppresses Th2 cytokine production. May transport LEP across the blood-brain barrier. Binds LEP and mediates LEP endocytosis. Does not induce phosphorylation of and activate STAT3. Functionally, antagonizes Isoform A and isoform B-mediated LEP binding and endocytosis. The polypeptide is Leptin receptor (Lepr) (Mus musculus (Mouse)).